The primary structure comprises 137 residues: Large-conductance mechanosensitive channel (137 aa).

The next 2 helical transmembrane spans lie at 10-30 (FAMR…AAFG) and 76-96 (GVFL…FMAI).

It belongs to the MscL family. Homopentamer.

The protein resides in the cell inner membrane. Channel that opens in response to stretch forces in the membrane lipid bilayer. May participate in the regulation of osmotic pressure changes within the cell. This chain is Large-conductance mechanosensitive channel, found in Erwinia tasmaniensis (strain DSM 17950 / CFBP 7177 / CIP 109463 / NCPPB 4357 / Et1/99).